The primary structure comprises 507 residues: Carnosic acid synthase (507 aa).

A helical transmembrane segment spans residues 6-23; the sequence is VFSLAFLAAWFIVVFPRW. Cys450 is a heme binding site.

It belongs to the cytochrome P450 family. It depends on heme as a cofactor. As to expression, expressed in glandular trichomes of young leaves.

It localises to the membrane. It carries out the reaction 11-hydroxyferruginol + 3 reduced [NADPH--hemoprotein reductase] + 3 O2 = carnosate + 3 oxidized [NADPH--hemoprotein reductase] + 4 H2O + 4 H(+). It catalyses the reaction miltiradiene + 2 reduced [NADPH--hemoprotein reductase] + 2 O2 = miltiradien-20-al + 2 oxidized [NADPH--hemoprotein reductase] + 3 H2O + 2 H(+). The enzyme catalyses ferruginol + 3 reduced [NADPH--hemoprotein reductase] + 3 O2 = pisiferate + 3 oxidized [NADPH--hemoprotein reductase] + 4 H2O + 4 H(+). It functions in the pathway secondary metabolite biosynthesis; terpenoid biosynthesis. Its function is as follows. Monooxygenase involved in the biosynthesis of carnosate, a potent antioxidant labdane-related diterpene natural product. Catalyzes the oxidation of 11-hydroxyferruginol to produce carnosate. Mediates the conversion of miltiradien into miltiradien-20-al. Also involved in the production of pisiferic acid and derivative products from ferruginol. This chain is Carnosic acid synthase, found in Rosmarinus officinalis (Rosemary).